We begin with the raw amino-acid sequence, 371 residues long: F-box protein At2g26850 (371 aa).

Positions 59-105 (KMSILDLPDLPLDCILELLPPSELCTMARVCSSLRERCVSDHLWEKH) constitute an F-box domain.

The sequence is that of F-box protein At2g26850 from Arabidopsis thaliana (Mouse-ear cress).